Reading from the N-terminus, the 97-residue chain is MTRISSDDVRKVSKLARLEISEEHVETYANQLEEILEYIAQLEKIDTKNIPPTTRAVEVVNVLREDIVDKSNVRDKILDLAPNREGQFYRVPKILAE.

It belongs to the GatC family. Heterotrimer of A, B and C subunits.

The enzyme catalyses L-glutamyl-tRNA(Gln) + L-glutamine + ATP + H2O = L-glutaminyl-tRNA(Gln) + L-glutamate + ADP + phosphate + H(+). It carries out the reaction L-aspartyl-tRNA(Asn) + L-glutamine + ATP + H2O = L-asparaginyl-tRNA(Asn) + L-glutamate + ADP + phosphate + 2 H(+). Functionally, allows the formation of correctly charged Asn-tRNA(Asn) or Gln-tRNA(Gln) through the transamidation of misacylated Asp-tRNA(Asn) or Glu-tRNA(Gln) in organisms which lack either or both of asparaginyl-tRNA or glutaminyl-tRNA synthetases. The reaction takes place in the presence of glutamine and ATP through an activated phospho-Asp-tRNA(Asn) or phospho-Glu-tRNA(Gln). This chain is Aspartyl/glutamyl-tRNA(Asn/Gln) amidotransferase subunit C, found in Prochlorococcus marinus (strain SARG / CCMP1375 / SS120).